The chain runs to 598 residues: MGYERLGPSGATGSVTTSTTTAPILNQVSTSEQPENNNRRSKKKLVVSSIVLAISLILAAAIFAGVRSRLKLNQSVPGLARKPSQAISKACELTRFPELCVDSLMDFPGSLAASSSKDLIHVTVNMTLHHFSHALYSSASLSFVDMPPRARSAYDSCVELLDDSVDALSRALSSVVSSSAKPQDVTTWLSAALTNHDTCTEGFDGVDDGGVKDHMTAALQNLSELVSNCLAIFSASHDGDDFAGVPIQNRRLLGVEEREEKFPRWMRPKEREILEMPVSQIQADIIVSKDGNGTCKTISEAIKKAPQNSTRRIIIYVKAGRYEENNLKVGRKKINLMFVGDGKGKTVISGGKSIFDNITTFHTASFAATGAGFIARDITFENWAGPAKHQAVALRIGADHAVIYRCNIIGYQDTLYVHSNRQFFRECDIYGTVDFIFGNAAVVLQNCSIYARKPMDFQKNTITAQNRKDPNQNTGISIHASRVLAASDLQATNGSTQTYLGRPWKLFSRTVYMMSYIGGHVHTRGWLEWNTTFALDTLYYGEYLNSGPGSGLGQRVSWPGYRVINSTAEANRFTVAEFIYGSSWLPSTGVSFLAGLSI.

Residues Met-1–Arg-40 are disordered. Over residues Gly-7 to Pro-23 the composition is skewed to low complexity. Residues Ile-24 to Asn-36 show a composition bias toward polar residues. Residues Val-46 to Val-66 form a helical membrane-spanning segment. The pectinesterase inhibitor 34 stretch occupies residues Arg-81–Ile-232. Residues Asp-284–Ser-582 are pectinesterase 34. The substrate site is built by Thr-360 and Gln-390. Residue Asp-413 is the Proton donor; for pectinesterase activity of the active site. A disulfide bridge links Cys-427 with Cys-447. The active-site Nucleophile; for pectinesterase activity is Asp-434. Residues Arg-502 and Trp-504 each coordinate substrate.

The protein in the N-terminal section; belongs to the PMEI family. This sequence in the C-terminal section; belongs to the pectinesterase family. In terms of tissue distribution, expressed in siliques.

Its subcellular location is the membrane. It carries out the reaction [(1-&gt;4)-alpha-D-galacturonosyl methyl ester](n) + n H2O = [(1-&gt;4)-alpha-D-galacturonosyl](n) + n methanol + n H(+). It functions in the pathway glycan metabolism; pectin degradation; 2-dehydro-3-deoxy-D-gluconate from pectin: step 1/5. Acts in the modification of cell walls via demethylesterification of cell wall pectin. In Arabidopsis thaliana (Mouse-ear cress), this protein is Probable pectinesterase/pectinesterase inhibitor 34 (PME34).